We begin with the raw amino-acid sequence, 527 residues long: Type-2 serine--tRNA ligase (527 aa).

Ala317 provides a ligand contact to L-serine. Residue Cys319 coordinates Zn(2+). Arg349 is an L-serine binding site. Residues 349-351 and 360-361 contribute to the ATP site; these read RWE and RV. 366-368 serves as a coordination point for L-serine; that stretch reads RIE. Glu368 and Cys478 together coordinate Zn(2+). An ATP-binding site is contributed by Arg485.

Belongs to the class-II aminoacyl-tRNA synthetase family. Type-2 seryl-tRNA synthetase subfamily. In terms of assembly, homodimer. Requires Zn(2+) as cofactor.

The protein localises to the cytoplasm. It catalyses the reaction tRNA(Ser) + L-serine + ATP = L-seryl-tRNA(Ser) + AMP + diphosphate + H(+). The catalysed reaction is tRNA(Sec) + L-serine + ATP = L-seryl-tRNA(Sec) + AMP + diphosphate + H(+). Its pathway is aminoacyl-tRNA biosynthesis; selenocysteinyl-tRNA(Sec) biosynthesis; L-seryl-tRNA(Sec) from L-serine and tRNA(Sec): step 1/1. Its function is as follows. Catalyzes the attachment of serine to tRNA(Ser). Is also able to aminoacylate tRNA(Sec) with serine, to form the misacylated tRNA L-seryl-tRNA(Sec), which will be further converted into selenocysteinyl-tRNA(Sec). The sequence is that of Type-2 serine--tRNA ligase from Methanopyrus kandleri (strain AV19 / DSM 6324 / JCM 9639 / NBRC 100938).